The following is a 191-amino-acid chain: Protein GrpE (191 aa).

The span at 1-10 (MNHEEQKVEA) shows a compositional bias: basic and acidic residues. The tract at residues 1-28 (MNHEEQKVEAMEQVEAQPVEPTDVDSEV) is disordered.

The protein belongs to the GrpE family. As to quaternary structure, homodimer.

The protein resides in the cytoplasm. Its function is as follows. Participates actively in the response to hyperosmotic and heat shock by preventing the aggregation of stress-denatured proteins, in association with DnaK and GrpE. It is the nucleotide exchange factor for DnaK and may function as a thermosensor. Unfolded proteins bind initially to DnaJ; upon interaction with the DnaJ-bound protein, DnaK hydrolyzes its bound ATP, resulting in the formation of a stable complex. GrpE releases ADP from DnaK; ATP binding to DnaK triggers the release of the substrate protein, thus completing the reaction cycle. Several rounds of ATP-dependent interactions between DnaJ, DnaK and GrpE are required for fully efficient folding. This chain is Protein GrpE, found in Aeromonas hydrophila subsp. hydrophila (strain ATCC 7966 / DSM 30187 / BCRC 13018 / CCUG 14551 / JCM 1027 / KCTC 2358 / NCIMB 9240 / NCTC 8049).